Consider the following 932-residue polypeptide: F-box protein COS111 (932 aa).

Positions 29 to 63 are disordered; sequence VSAKHRPSSTGVYGHDASTVDHASRSNNNLNLTRS. Residues 53–63 are compositionally biased toward low complexity; sequence RSNNNLNLTRS. In terms of domain architecture, F-box spans 146–193; sequence RKEISDLPDEVLRNILSNVKDDQRTLVNCLYVNKAFYNATKPTLYERP. A compositionally biased stretch (polar residues) spans 346–358; it reads LSEGKSSDNGNNG. 4 disordered regions span residues 346–369, 389–450, 470–500, and 863–893; these read LSEG…SVSS, TLSG…SNWF, ISSK…TEPF, and SVLP…SNDP. 2 stretches are compositionally biased toward low complexity: residues 395 to 431 and 438 to 447; these read NNSS…SQID and TSSKSTSSTS. Over residues 876–890 the composition is skewed to polar residues; it reads DDTNNGENTIAQPFS.

Functionally, F-box protein probably involved in ubiquitin conjugation pathway. The protein is F-box protein COS111 (COS111) of Candida glabrata (strain ATCC 2001 / BCRC 20586 / JCM 3761 / NBRC 0622 / NRRL Y-65 / CBS 138) (Yeast).